We begin with the raw amino-acid sequence, 526 residues long: GMP synthase [glutamine-hydrolyzing] (526 aa).

Residues 14-208 (SILIVDFGSQ…VHDICGLAGD (195 aa)) form the Glutamine amidotransferase type-1 domain. Cysteine 91 acts as the Nucleophile in catalysis. Residues histidine 182 and glutamate 184 contribute to the active site. The region spanning 209–401 (WTMAEFRQTK…LGMPDVFVDR (193 aa)) is the GMPS ATP-PPase domain. 236 to 242 (SGGVDSS) lines the ATP pocket.

Homodimer.

The catalysed reaction is XMP + L-glutamine + ATP + H2O = GMP + L-glutamate + AMP + diphosphate + 2 H(+). It functions in the pathway purine metabolism; GMP biosynthesis; GMP from XMP (L-Gln route): step 1/1. Functionally, catalyzes the synthesis of GMP from XMP. This is GMP synthase [glutamine-hydrolyzing] from Zymomonas mobilis subsp. mobilis (strain ATCC 31821 / ZM4 / CP4).